We begin with the raw amino-acid sequence, 119 residues long: Ribonuclease P protein component (119 aa).

It belongs to the RnpA family. Consists of a catalytic RNA component (M1 or rnpB) and a protein subunit.

It catalyses the reaction Endonucleolytic cleavage of RNA, removing 5'-extranucleotides from tRNA precursor.. In terms of biological role, RNaseP catalyzes the removal of the 5'-leader sequence from pre-tRNA to produce the mature 5'-terminus. It can also cleave other RNA substrates such as 4.5S RNA. The protein component plays an auxiliary but essential role in vivo by binding to the 5'-leader sequence and broadening the substrate specificity of the ribozyme. The polypeptide is Ribonuclease P protein component (Edwardsiella ictaluri (strain 93-146)).